Consider the following 373-residue polypeptide: GPN-loop GTPase 1 (373 aa).

Residue Ala-2 is modified to N-acetylalanine. 29–34 (GSGKTT) provides a ligand contact to GTP. A Gly-Pro-Asn (GPN)-loop; involved in dimer interface motif is present at residues 86-88 (GPN). Position 189–192 (189–192 (NKTD)) interacts with GTP. A phosphoserine mark is found at Ser-301, Ser-312, and Ser-314. The disordered stretch occupies residues 304–373 (LDTGTATGSS…SMAQYWKKNK (70 aa)). Thr-328 carries the phosphothreonine modification. Residues 330–342 (DEEDEEADSDTDD) show a composition bias toward acidic residues. Residue Ser-338 is modified to Phosphoserine. Phosphothreonine is present on Thr-340. Residues 343–355 (IDHRVTEESREEP) are compositionally biased toward basic and acidic residues.

It belongs to the GPN-loop GTPase family. Heterodimer with GPN3. Binds to RNA polymerase II (RNAPII). Interacts directly with RNAPII subunits RPB4 and RPB7 and the CTD of RPB1. Interacts with XPA.

The protein resides in the cytoplasm. Its subcellular location is the nucleus. Functionally, small GTPase required for proper nuclear import of RNA polymerase II (RNAPII). May act at an RNAP assembly step prior to nuclear import. Forms an interface between the RNA polymerase II enzyme and chaperone/scaffolding proteins, suggesting that it is required to connect RNA polymerase II to regulators of protein complex formation. May be involved in nuclear localization of XPA. This is GPN-loop GTPase 1 from Bos taurus (Bovine).